Reading from the N-terminus, the 478-residue chain is Cytochrome c-552 (478 aa).

A signal peptide spans Met-1–Ala-26. His-94 provides a ligand contact to heme c. Heme is bound by residues Cys-122, Cys-125, and Lys-126. The heme c site is built by Cys-160, Cys-163, His-164, Cys-209, Cys-212, and His-213. Ca(2+) is bound by residues Glu-215, Tyr-216, Lys-261, and Gln-263. Tyr-216 provides a ligand contact to substrate. His-264 is a binding site for substrate. The heme c site is built by His-275, Cys-282, Cys-285, His-286, His-301, Cys-314, Cys-317, His-318, and His-393.

This sequence belongs to the cytochrome c-552 family. Ca(2+) serves as cofactor. It depends on heme c as a cofactor.

It is found in the periplasm. The enzyme catalyses 6 Fe(III)-[cytochrome c] + NH4(+) + 2 H2O = 6 Fe(II)-[cytochrome c] + nitrite + 8 H(+). Its pathway is nitrogen metabolism; nitrate reduction (assimilation). Catalyzes the reduction of nitrite to ammonia, consuming six electrons in the process. This Salmonella paratyphi A (strain ATCC 9150 / SARB42) protein is Cytochrome c-552.